We begin with the raw amino-acid sequence, 275 residues long: MELWFTEKQTKHFGITARINRTLHTEQTEFQKLDMVETEEFGNMLILDGMVMTTEKDEFVYHEMVAHVPLFTHPNPENVLVVGGGDGGVIREVLKHPSVKKATLVEIDGKVIEYSKQYLPSIAGALDDERVEVKVGDGFLHIAESENEYDVIMVDSTEPVGPAVNLFTKGFYAGISKALKEDGIFVAQTDNPWFTPELITTVFKDVKEIFPITRLYTANIPTYPSGLWTFTIGSKKHDPLEVSEERFHEIETKYYTKELHNAAFALPKFVGDLIK.

The PABS domain occupies 2–235 (ELWFTEKQTK…GLWTFTIGSK (234 aa)). Gln-31 is an S-methyl-5'-thioadenosine binding site. Residues His-62 and Asp-86 each coordinate spermidine. S-methyl-5'-thioadenosine contacts are provided by residues Glu-106 and 137–138 (DG). Catalysis depends on Asp-155, which acts as the Proton acceptor. 155–158 (DSTE) is a binding site for spermidine. Pro-162 serves as a coordination point for S-methyl-5'-thioadenosine.

The protein belongs to the spermidine/spermine synthase family. As to quaternary structure, homodimer or homotetramer.

The protein localises to the cytoplasm. The enzyme catalyses S-adenosyl 3-(methylsulfanyl)propylamine + putrescine = S-methyl-5'-thioadenosine + spermidine + H(+). Its pathway is amine and polyamine biosynthesis; spermidine biosynthesis; spermidine from putrescine: step 1/1. In terms of biological role, catalyzes the irreversible transfer of a propylamine group from the amino donor S-adenosylmethioninamine (decarboxy-AdoMet) to putrescine (1,4-diaminobutane) to yield spermidine. The chain is Polyamine aminopropyltransferase from Bacillus mycoides (strain KBAB4) (Bacillus weihenstephanensis).